The chain runs to 350 residues: 5'-tyrosyl-DNA phosphodiesterase (350 aa).

Residues 113-117 (NIDGL) form an interaction with 5' end of substrate DNA region. Mg(2+)-binding residues include aspartate 115 and glutamate 145. The tract at residues 219-224 (HLESMR) is interaction with 5' end of substrate DNA. Catalysis depends on aspartate 258, which acts as the Proton donor/acceptor. The interval 260 to 262 (NLR) is interaction with 5' end of substrate DNA.

This sequence belongs to the CCR4/nocturin family. TTRAP/TDP2 subfamily. Requires Mg(2+) as cofactor. Mn(2+) serves as cofactor.

The protein resides in the nucleus. It is found in the PML body. Its function is as follows. DNA repair enzyme that can remove a variety of covalent adducts from DNA through hydrolysis of a 5'-phosphodiester bond, giving rise to DNA with a free 5' phosphate. Catalyzes the hydrolysis of dead-end complexes between DNA and the topoisomerase 2 (top2) active site tyrosine residue. Hydrolyzes 5'-phosphoglycolates on protruding 5' ends on DNA double-strand breaks (DSBs) due to DNA damage by radiation and free radicals. This Caenorhabditis briggsae protein is 5'-tyrosyl-DNA phosphodiesterase.